The primary structure comprises 930 residues: RNA-binding protein 10 (930 aa).

2 stretches are compositionally biased toward basic and acidic residues: residues Met-1 to Gly-14 and Arg-21 to Pro-45. Residues Met-1–Ala-127 are disordered. An N-acetylserine modification is found at Glu-2. Phosphoserine occurs at positions 30, 61, and 89. Over residues Asp-59 to Tyr-70 the composition is skewed to acidic residues. The segment covering Arg-80–Ser-89 has biased composition (basic residues). Residues Arg-98–Gln-111 show a composition bias toward basic and acidic residues. Acidic residues predominate over residues Gly-112–Glu-125. Positions Asn-129 to Pro-209 constitute an RRM 1 domain. The RanBP2-type zinc finger occupies Lys-212–Glu-242. Positions Asp-300–Gly-384 constitute an RRM 2 domain. Lys-383 carries the post-translational modification N6-acetyllysine. 4 disordered regions span residues Pro-466–Ser-524, Ser-537–Val-569, Glu-620–Arg-685, and Lys-700–Leu-753. Residues Tyr-508 to Ser-524 are compositionally biased toward polar residues. The segment covering Ser-541 to Ala-557 has biased composition (low complexity). Composition is skewed to basic and acidic residues over residues Ala-623–Lys-639, Lys-653–Phe-669, and Lys-700–Thr-709. Phosphoserine is present on residues Ser-718, Ser-723, Ser-733, Ser-736, and Ser-738. The segment covering Glu-743 to Leu-753 has biased composition (basic and acidic residues). The C2H2-type; atypical zinc-finger motif lies at Leu-759–His-784. A phosphoserine mark is found at Ser-781 and Ser-797. The span at Arg-815–Gly-826 shows a compositional bias: basic and acidic residues. Positions Arg-815–Ile-861 are disordered. A Phosphoserine modification is found at Ser-845. In terms of domain architecture, G-patch spans Ser-858–Ser-904. Arg-902 carries the omega-N-methylarginine modification.

As to quaternary structure, associates with the spliceosome. Component of a large chromatin remodeling complex, at least composed of MYSM1, PCAF, RBM10 and KIF11/TRIP5.

The protein localises to the nucleus. In terms of biological role, binds to ssRNA containing the consensus sequence 5'-AGGUAA-3'. May be involved in post-transcriptional processing, most probably in mRNA splicing. Binds to RNA homopolymers, with a preference for poly(G) and poly(U) and little for poly(A). May bind to specific miRNA hairpins. This Homo sapiens (Human) protein is RNA-binding protein 10.